The primary structure comprises 372 residues: Tubby-like F-box protein 9 (372 aa).

Positions 1–51 (MALWRCSSSWLSSVSRSSGGVGGGESKVSPEIAPVSGGEGEGEEEEGEEER) are disordered. Residues 7–18 (SSSWLSSVSRSS) show a composition bias toward low complexity. A compositionally biased stretch (acidic residues) spans 40–49 (GEGEEEEGEE). Residues 50 to 105 (ERWSRLLPELLTEIMRRVDAGAERWPPRRDVVACACVCRRWRDAAVSVVRPPLECG) form the F-box domain.

The protein belongs to the TUB family. Ubiquitous.

The protein is Tubby-like F-box protein 9 (TULP9) of Oryza sativa subsp. japonica (Rice).